The sequence spans 217 residues: Probable cytidylate kinase (217 aa).

9-17 (GPAGSGKST) lines the ATP pocket.

Belongs to the cytidylate kinase family. Type 1 subfamily.

It catalyses the reaction CMP + ATP = CDP + ADP. The catalysed reaction is dCMP + ATP = dCDP + ADP. This is Probable cytidylate kinase from Vairimorpha ceranae (strain BRL01) (Microsporidian parasite).